Here is a 2893-residue protein sequence, read N- to C-terminus: Genome polyprotein (2893 aa).

A disordered region spans residues 206-226 (VQAKPEMDNPNPGPDGEGEVE). The SF3 helicase domain occupies 1446–1612 (SKLKTDLMEM…EEKKRGCKHC (167 aa)). 1472–1479 (GASGIGKS) contributes to the ATP binding site. Residues 2119–2345 (GSTQQVDAAV…VAEPLVHEMF (227 aa)) enclose the Peptidase C3 domain. Active-site for 3C-like protease activity residues include His-2170, Asn-2227, and Cys-2307. Residues 2633–2763 (THIVTGDYKN…NVSDNMIDKF (131 aa)) enclose the RdRp catalytic domain.

In terms of processing, specific enzymatic cleavages in vivo by the viral 3C-like protease yield three mature proteins. 3C-like protease is cleaved autocatalytically.

Its subcellular location is the virion. It carries out the reaction RNA(n) + a ribonucleoside 5'-triphosphate = RNA(n+1) + diphosphate. The enzyme catalyses ATP + H2O = ADP + phosphate + H(+). With respect to regulation, inhibited by Rupintrivir. In terms of biological role, capsid protein that assembles with the capsid proteins VP1 and VP3 to form a pseudo-T3 icosahedral capsid of about 40 nm. Capsid protein that assembles with the capsid proteins VP1 and VP2 to form a pseudo T3 icosahedral capsid of about 40 nm. Functionally, capsid protein that assembles with the capsid proteins VP2 and VP3 to form a pseudo T3 icosahedral capsid of about 40 nm. Its function is as follows. Displays RNA helix destabilizing and strand annealing acceleration activity. This activity is necessary at several points during genome replication, for example to separate duplexes that form after genome replication. In terms of biological role, cysteine protease that generates mature viral proteins from the precursor polyprotein. Replicates genomic and antigenomic RNA. In Deformed wing virus (DWV), this protein is Genome polyprotein.